The primary structure comprises 251 residues: Flap endonuclease Xni (251 aa).

Asp-104 lines the Mg(2+) pocket. The 5'-3' exonuclease domain occupies 160-249 (VLPRQLPDYW…IDGNLQQLRL (90 aa)). K(+) contacts are provided by Leu-171, Ala-172, Pro-180, Val-182, and Ile-185. An interaction with DNA region spans residues 184–189 (GIGPKS).

It belongs to the Xni family. The cofactor is Mg(2+). Requires K(+) as cofactor.

Functionally, has flap endonuclease activity. During DNA replication, flap endonucleases cleave the 5'-overhanging flap structure that is generated by displacement synthesis when DNA polymerase encounters the 5'-end of a downstream Okazaki fragment. This chain is Flap endonuclease Xni, found in Salmonella typhimurium (strain LT2 / SGSC1412 / ATCC 700720).